Reading from the N-terminus, the 206-residue chain is Uridine kinase (206 aa).

11 to 18 lines the ATP pocket; that stretch reads GGSASGKT.

Belongs to the uridine kinase family.

It is found in the cytoplasm. It carries out the reaction uridine + ATP = UMP + ADP + H(+). The enzyme catalyses cytidine + ATP = CMP + ADP + H(+). The protein operates within pyrimidine metabolism; CTP biosynthesis via salvage pathway; CTP from cytidine: step 1/3. Its pathway is pyrimidine metabolism; UMP biosynthesis via salvage pathway; UMP from uridine: step 1/1. This is Uridine kinase from Lactococcus lactis subsp. cremoris (strain MG1363).